The primary structure comprises 348 residues: Replication-associated protein (348 aa).

Over residues 1–17 (MRAPASSAASNRPGPSN) the composition is skewed to low complexity. The segment at 1–22 (MRAPASSAASNRPGPSNHPTPR) is disordered. The 104-residue stretch at 22–125 (RWNSKQFFLT…NGDSDEMGEL (104 aa)) folds into the CRESS-DNA virus Rep endonuclease domain. The RCR-1 signature appears at 29–32 (FLTY). 3 residues coordinate a divalent metal cation: E63, H71, and H73. Positions 71–73 (HLH) match the RCR-2 motif. The For DNA cleavage activity role is filled by Y111. Positions 111–114 (YISK) match the RCR-3 motif. Residues 176–188 (SAAALFTEPPPVY) are oligomerization. 228–235 (GPSRTGKT) contacts ATP. The interval 251-269 (VDFTHYDKDAIYNVIDDVP) is transactivation. The short motif at 291–301 (KYGKKKKIPGG) is the Nuclear localization signal element.

It belongs to the geminiviridae Rep protein family. In terms of assembly, homooligomer. Rep binds to repeated DNA motifs (iterons). Forms the O-complex, which is a Rep-DNA complex involved in the initiation of RCR. Part of the C- and V-complexes which are RepA-Rep-DNA complexes involved in the c-sense and v-sense transcription. The cofactor is Mg(2+). It depends on Mn(2+) as a cofactor.

The protein resides in the host nucleus. Its function is as follows. Essential for the replication of viral ssDNA. The closed circular ssDNA genome is first converted to a superhelical dsDNA. Rep binds a specific region at the genome origin of replication. It introduces an endonucleolytic nick within the conserved sequence 5'-TAATATTAC-3' in the intergenic region of the genome present in all geminiviruses, thereby initiating the rolling circle replication (RCR). Following cleavage, binds covalently to the 5'-phosphate of DNA as a tyrosyl ester. The cleavage gives rise to a free 3'-OH that serves as a primer for the cellular DNA polymerase. The polymerase synthesizes the (+) strand DNA by rolling circle mechanism. After one round of replication, a Rep-catalyzed nucleotidyl transfer reaction releases a circular single-stranded virus genome, thereby terminating the replication. Displays origin-specific DNA cleavage, nucleotidyl transferase, ATPase and helicase activities. Acts as an inhibitor of C-sense gene transcription. This is Replication-associated protein from Miscanthus streak virus (isolate 91) (MiSV).